The primary structure comprises 276 residues: Anthranilate synthase beta subunit 1, chloroplastic (276 aa).

The transit peptide at 1-50 (MAASTLYKSCLLQPKSGSTTRRLNPSLVNPLTNPTRVSVLGKSRRDVFAK) directs the protein to the chloroplast. One can recognise a Glutamine amidotransferase type-1 domain in the interval 74 to 273 (PIIVIDNYDS…IKIVEKKESE (200 aa)). Residue cysteine 152 is the Nucleophile of the active site. Catalysis depends on residues histidine 247 and glutamate 249.

As to quaternary structure, heterotetramer consisting of two non-identical subunits: a beta subunit and a large alpha subunit. In terms of tissue distribution, expressed in the central cylinder of mature primary root zones, including pericycle and early lateral root primordia, and vasculature of cotyledons.

The protein localises to the plastid. It is found in the chloroplast. It carries out the reaction chorismate + L-glutamine = anthranilate + pyruvate + L-glutamate + H(+). It functions in the pathway amino-acid biosynthesis; L-tryptophan biosynthesis; L-tryptophan from chorismate: step 1/5. Its function is as follows. Part of a heterotetrameric complex that catalyzes the two-step biosynthesis of anthranilate, an intermediate in the biosynthesis of L-tryptophan. In the first step, the glutamine-binding beta subunit of anthranilate synthase (AS) provides the glutamine amidotransferase activity which generates ammonia as a substrate that, along with chorismate, is used in the second step, catalyzed by the large alpha subunit of AS to produce anthranilate. Plays an important regulatory role in auxin production via the tryptophan-dependent biosynthetic pathway. This is Anthranilate synthase beta subunit 1, chloroplastic (ASB1) from Arabidopsis thaliana (Mouse-ear cress).